Here is a 395-residue protein sequence, read N- to C-terminus: Acetyl-CoA acetyltransferase (395 aa).

The Acyl-thioester intermediate role is filled by C90. CoA-binding residues include Y185 and K230. Y185 is a K(+) binding site. Residues A246, A247, and A249 each contribute to the K(+) site. S250 provides a ligand contact to CoA. Position 347 (V347) interacts with K(+). Catalysis depends on proton acceptor residues H351 and C381.

This sequence belongs to the thiolase-like superfamily. Thiolase family. Homotetramer.

Its subcellular location is the cytoplasm. The enzyme catalyses 2 acetyl-CoA = acetoacetyl-CoA + CoA. It functions in the pathway metabolic intermediate biosynthesis; (R)-mevalonate biosynthesis; (R)-mevalonate from acetyl-CoA: step 1/3. Functionally, acetyl-CoA acetyltransferase; part of the first module of ergosterol biosynthesis pathway that includes the early steps of the pathway, conserved across all eukaryotes, and which results in the formation of mevalonate from acetyl-coenzyme A (acetyl-CoA). Erg10 catalyzes the formation of acetoacetyl-CoA from acetyl-CoA. The first module starts with the action of the cytosolic acetyl-CoA acetyltransferase eg10 that catalyzes the formation of acetoacetyl-CoA. The hydroxymethylglutaryl-CoA synthases erg13 then condenses acetyl-CoA with acetoacetyl-CoA to form HMG-CoA. The rate-limiting step of the early module is the reduction to mevalonate by the 3-hydroxy-3-methylglutaryl-coenzyme A (HMG-CoA) reductases hcs1. This is Acetyl-CoA acetyltransferase (erg10) from Schizosaccharomyces pombe (strain 972 / ATCC 24843) (Fission yeast).